The following is a 234-amino-acid chain: HTH-type transcriptional repressor FabR (234 aa).

The HTH tetR-type domain occupies 29–89 (KTRRSLVEAA…TMVDESGLML (61 aa)). Positions 52 to 71 (SLREVAREAGIAPTSFYRHF) form a DNA-binding region, H-T-H motif.

As to quaternary structure, homodimer.

Its subcellular location is the cytoplasm. With respect to regulation, has been suggested to require either an unsaturated acyl carrier protein or unsaturated acyl-CoA (but not their saturated equivalents) for DNA-binding. Another group suggests that unsaturated thioesters are not essential but act instead to enhance DNA-binding. Its function is as follows. Binds the promoter region of at least fabA and fabB, but probably not yqfA. Represses the transcription of fabA and fabB, involved in unsaturated fatty acid (UFA) biosynthesis. By controlling UFA production, FabR directly influences the physical properties of the membrane bilayer. The sequence is that of HTH-type transcriptional repressor FabR from Escherichia coli (strain K12).